We begin with the raw amino-acid sequence, 313 residues long: Ribosomal RNA small subunit methyltransferase H (313 aa).

Residues 35 to 37 (GGH), Asp55, Phe81, Asp103, and Gln110 each bind S-adenosyl-L-methionine.

The protein belongs to the methyltransferase superfamily. RsmH family.

The protein resides in the cytoplasm. The catalysed reaction is cytidine(1402) in 16S rRNA + S-adenosyl-L-methionine = N(4)-methylcytidine(1402) in 16S rRNA + S-adenosyl-L-homocysteine + H(+). Its function is as follows. Specifically methylates the N4 position of cytidine in position 1402 (C1402) of 16S rRNA. This Pseudomonas syringae pv. syringae (strain B728a) protein is Ribosomal RNA small subunit methyltransferase H.